Reading from the N-terminus, the 715-residue chain is Arginine kinase (715 aa).

2 Approximate repeats span residues 1–366 (MADP…IAKK) and 367–715 (RSVF…KSTK). One can recognise a Phosphagen kinase N-terminal 1 domain in the interval 11–95 (KSKNAFPDPL…FDAIIEDYHS (85 aa)). 68–72 (GVGVY) provides a ligand contact to substrate. The Phosphagen kinase C-terminal 1 domain occupies 123–362 (YIRSTRIRVA…KALMELEKEA (240 aa)). ATP is bound by residues 126–130 (STRIR) and His-189. A substrate-binding site is contributed by Glu-229. Residue Arg-233 coordinates ATP. Cys-275 lines the substrate pocket. Residues 284–288 (RASVH) and 312–317 (RGIHGE) contribute to the ATP site. Residue Glu-317 participates in substrate binding. In terms of domain architecture, Phosphagen kinase N-terminal 2 spans 365–447 (KKRSVFPEVL…FDKIVEDYHS (83 aa)). The Phosphagen kinase C-terminal 2 domain maps to 475-714 (YIRSTRIRVA…KKLLEIEKST (240 aa)).

This sequence belongs to the ATP:guanido phosphotransferase family. As to quaternary structure, monomer.

The catalysed reaction is L-arginine + ATP = N(omega)-phospho-L-arginine + ADP + H(+). This is Arginine kinase from Anthopleura japonica (Sea anemone).